Reading from the N-terminus, the 157-residue chain is Nascent polypeptide-associated complex subunit beta (157 aa).

Positions 1–28 are disordered; it reads MPVDPEKLAKLQKSSAKKVGGSRVKAKK. The 66-residue stretch at 33–98 folds into the NAC-A/B domain; sequence EQDDTKLIEA…PQEKNITQLI (66 aa). Residues 124–157 form a disordered region; sequence KTPKDFNTGSANAAADAGGEDIPDLVDQKFDDVE.

This sequence belongs to the NAC-beta family. As to quaternary structure, part of the nascent polypeptide-associated complex (NAC), consisting of EGD2 and EGD1. NAC associates with ribosomes via EGD1.

It localises to the cytoplasm. It is found in the nucleus. In terms of biological role, component of the nascent polypeptide-associated complex (NAC), a dynamic component of the ribosomal exit tunnel, protecting the emerging polypeptides from interaction with other cytoplasmic proteins to ensure appropriate nascent protein targeting. The NAC complex also promotes mitochondrial protein import by enhancing productive ribosome interactions with the outer mitochondrial membrane and blocks the inappropriate interaction of ribosomes translating non-secretory nascent polypeptides with translocation sites in the membrane of the endoplasmic reticulum. EGD1 may act as a transcription factor that exert a negative effect on the expression of several genes that are transcribed by RNA polymerase II. The sequence is that of Nascent polypeptide-associated complex subunit beta (EGD1) from Candida albicans (strain SC5314 / ATCC MYA-2876) (Yeast).